The sequence spans 162 residues: Probable E3 ubiquitin-protein ligase XERICO (162 aa).

Residues 12-28 form a helical membrane-spanning segment; it reads GMLCVILVNTALSISIV. Residues 103 to 145 form an RING-type; atypical zinc finger; that stretch reads CSVCLSKFQGDSEINKLKCGHLFHKTCLEKWIDYWNITCPLCR.

Interacts with UBC8 and TULP9. As to expression, ubiquitous. Higher expression in actively growing tissues.

The protein resides in the membrane. It catalyses the reaction S-ubiquitinyl-[E2 ubiquitin-conjugating enzyme]-L-cysteine + [acceptor protein]-L-lysine = [E2 ubiquitin-conjugating enzyme]-L-cysteine + N(6)-ubiquitinyl-[acceptor protein]-L-lysine.. The protein operates within protein modification; protein ubiquitination. Its function is as follows. Function on abscisic acid homeostasis at post-translational level, probably through ubiquitin/proteasome-dependent substrate-specific degradation. The polypeptide is Probable E3 ubiquitin-protein ligase XERICO (XERICO) (Arabidopsis thaliana (Mouse-ear cress)).